A 474-amino-acid chain; its full sequence is 3-isopropylmalate dehydratase large subunit (474 aa).

Cys-352, Cys-413, and Cys-416 together coordinate [4Fe-4S] cluster.

This sequence belongs to the aconitase/IPM isomerase family. LeuC type 1 subfamily. Heterodimer of LeuC and LeuD. [4Fe-4S] cluster serves as cofactor.

The enzyme catalyses (2R,3S)-3-isopropylmalate = (2S)-2-isopropylmalate. Its pathway is amino-acid biosynthesis; L-leucine biosynthesis; L-leucine from 3-methyl-2-oxobutanoate: step 2/4. In terms of biological role, catalyzes the isomerization between 2-isopropylmalate and 3-isopropylmalate, via the formation of 2-isopropylmaleate. The sequence is that of 3-isopropylmalate dehydratase large subunit from Pseudomonas syringae pv. syringae (strain B728a).